Reading from the N-terminus, the 626-residue chain is MAPFLSAHGESASSSSSSSPTPSRHTRNQHVDYSTPGSTGYNIPQNTTWNAPSNRKIRVLTIGAGISGILMAYQLQKHCENVEHVVYEKNEDVGGTWLENRYPRAGCDIPSHAYTYQFALNPDWPRFFSFAPDIWAYLNKVCETFDLKKYMRFHVEVVGCYWQEHAGEWVVKLREHLPNHEVREFEDRCNVLLYGAGVLNNFKFPDIPGLQDRFKGRVIHTARWPKDYKEEDWAKERVAVIGSGASSIQTVPGMQPYAKHLDIFVRTGVWFGVIAGNSGSQAKEYSEEERENFRRDPKAVVAHAREIEEQVNGMWGGFYAGSMGQKMGSGYFRTRMAEHIKDERLLQGFSPKFGLGCRRITPGDPYMEAIQKENVDVHFTPVESCTEKGVVGGDGVEREVDTVICATGFDVSYRPRFPVIGKDGVDLREKWDLCPESYLGLAIPDMPNFLTFIGPTWPIENGSVMAPLHSVSEYAIQLIKRMQNENIRSWVPRQDITDSFNDHVQEWIKHTVWKDDCRSWYKNNETGRVNAIWPGSSLHYQQVIERPRYEDFEIHSFNDNPWAHLGMGWTVQDRKGPKEEDVCPYFNVKNIDPKWYEACGGDSRLLVERPEESSQAGQQFLWPTGT.

Positions 1 to 23 (MAPFLSAHGESASSSSSSSPTPS) are enriched in low complexity. A disordered region spans residues 1-47 (MAPFLSAHGESASSSSSSSPTPSRHTRNQHVDYSTPGSTGYNIPQNT). Over residues 31-47 (VDYSTPGSTGYNIPQNT) the composition is skewed to polar residues. FAD is bound by residues 96–99 (TWLE), 108–109 (DI), and Tyr114. 106–108 (GCD) provides a ligand contact to NADP(+). NADP(+) contacts are provided by residues 243-249 (SGASSIQ) and 266-267 (RT).

The protein belongs to the FAD-binding monooxygenase family. The cofactor is FAD.

It functions in the pathway mycotoxin biosynthesis. Its function is as follows. FAD-binding monooxygenase; part of the fragmented gene cluster that mediates the biosynthesis of dothistromin (DOTH), a polyketide toxin very similar in structure to the aflatoxin precursor, versicolorin B. The first step of the pathway is the conversion of acetate to norsolorinic acid (NOR) and requires the fatty acid synthase subunits hexA and hexB, as well as the polyketide synthase pksA. PksA combines a hexanoyl starter unit and 7 malonyl-CoA extender units to synthesize the precursor NOR. The hexanoyl starter unit is provided to the acyl-carrier protein (ACP) domain by the fungal fatty acid synthase hexA/hexB. The second step is the conversion of NOR to averantin (AVN) and requires the norsolorinic acid ketoreductase nor1, which catalyzes the dehydration of norsolorinic acid to form (1'S)-averantin. The cytochrome P450 monooxygenase avnA then catalyzes the hydroxylation of AVN to 5'hydroxyaverantin (HAVN). The next step is performed by adhA that transforms HAVN to averufin (AVF). Averufin might then be converted to hydroxyversicolorone by cypX and avfA. Hydroxyversicolorone is further converted versiconal hemiacetal acetate (VHA) by moxY. VHA is then the substrate for the versiconal hemiacetal acetate esterase est1 to yield versiconal (VAL). Versicolorin B synthase vbsA then converts VAL to versicolorin B (VERB) by closing the bisfuran ring. Then, the activity of the versicolorin B desaturase verB leads to versicolorin A (VERA). DotB, a predicted chloroperoxidase, may perform epoxidation of the A-ring of VERA. Alternatively, a cytochrome P450, such as cypX or avnA could catalyze this step. It is also possible that another, uncharacterized, cytochrome P450 enzyme is responsible for this step. Opening of the epoxide could potentially be achieved by the epoxide hydrolase epoA. However, epoA seems not to be required for DOTH biosynthesis, but other epoxide hydrolases may have the ability to complement this hydrolysis. Alternatively, opening of the epoxide ring could be achieved non-enzymatically. The next step is the deoxygenation of ring A to yield the 5,8-dihydroxyanthraquinone which is most likely catalyzed by the NADPH dehydrogenase encoded by ver1. The last stages of DOTH biosynthesis are proposed to involve hydroxylation of the bisfuran. OrdB and norB might have oxidative roles here. An alternative possibility is that cytochrome P450 monoogenases such as avnA and cypX might perform these steps in addition to previously proposed steps. The chain is FAD-binding monooxygenase moxY from Dothistroma septosporum (Red band needle blight fungus).